A 614-amino-acid polypeptide reads, in one-letter code: UDP-sugar pyrophosphorylase (614 aa).

A2 carries the N-acetylalanine modification.

The protein belongs to the USP family. It depends on Mg(2+) as a cofactor. Mn(2+) serves as cofactor. In terms of tissue distribution, ubiquitous, but most abundant in rosette leaves, inflorescences, stems, stamens and pollen.

It carries out the reaction a monosaccharide 1-phosphate + UTP + H(+) = a UDP-monosaccharide + diphosphate. Required for the synthesis of the intine, the pectocellulosic inner wall of developing pollen. May function as the terminal enzyme of the myo-inositol oxidation (MIO) pathway. May also play a role in the salvage pathway for synthesis of nucleotide sugars. Can use a wide range of substrates including glucose-1-phosphate, galactose-1-phosphate, xylose-1-phosphate, arabinose-1-phosphate and glucuronate-1-phosphate. The chain is UDP-sugar pyrophosphorylase (USP) from Arabidopsis thaliana (Mouse-ear cress).